The sequence spans 182 residues: ATP-dependent protease subunit HslV (182 aa).

The active site involves threonine 12. Na(+) contacts are provided by alanine 167, cysteine 170, and threonine 173.

This sequence belongs to the peptidase T1B family. HslV subfamily. A double ring-shaped homohexamer of HslV is capped on each side by a ring-shaped HslU homohexamer. The assembly of the HslU/HslV complex is dependent on binding of ATP.

The protein localises to the cytoplasm. The catalysed reaction is ATP-dependent cleavage of peptide bonds with broad specificity.. Its activity is regulated as follows. Allosterically activated by HslU binding. In terms of biological role, protease subunit of a proteasome-like degradation complex believed to be a general protein degrading machinery. In Chlorobium limicola (strain DSM 245 / NBRC 103803 / 6330), this protein is ATP-dependent protease subunit HslV.